The chain runs to 787 residues: Protein PAT1 homolog 2 (787 aa).

Disordered regions lie at residues 94-120 (KHLG…WTQD), 134-221 (EQVQ…NASP), 338-374 (VREH…GLQF), 411-445 (LAKK…QQPQ), and 765-787 (VSES…FVRG). Over residues 105 to 120 (GSFSRESSTATDWTQD) the composition is skewed to polar residues. Positions 142 to 153 (SSQPQSSPNSNS) are enriched in low complexity. Polar residues-rich tracts occupy residues 154-171 (LYRT…QHYS), 180-198 (STFT…SSPS), and 208-221 (GGSQ…NASP). Phosphoserine is present on residues serine 184 and serine 192. Positions 341–353 (HKHKSSHRSRKNR) are enriched in basic residues. 2 stretches are compositionally biased toward polar residues: residues 355 to 373 (GISQ…SGLQ) and 436 to 445 (SRNSSDQQPQ).

Its function is as follows. Activator of mRNA decapping. Involved in mRNA decay via decapping. The sequence is that of Protein PAT1 homolog 2 from Arabidopsis thaliana (Mouse-ear cress).